The chain runs to 139 residues: Large ribosomal subunit protein uL16c (139 aa).

The segment at 1-20 is disordered; the sequence is MLSPKRTKYRKHHRGRMKGK.

Belongs to the universal ribosomal protein uL16 family. Part of the 50S ribosomal subunit.

It localises to the plastid. The protein resides in the chloroplast. The protein is Large ribosomal subunit protein uL16c of Pleurastrum terricola (Filamentous green alga).